Consider the following 175-residue polypeptide: Peptide deformylase (175 aa).

Positions 99 and 141 each coordinate Fe cation. Residue glutamate 142 is part of the active site. Histidine 145 serves as a coordination point for Fe cation.

It belongs to the polypeptide deformylase family. Requires Fe(2+) as cofactor.

The enzyme catalyses N-terminal N-formyl-L-methionyl-[peptide] + H2O = N-terminal L-methionyl-[peptide] + formate. Removes the formyl group from the N-terminal Met of newly synthesized proteins. Requires at least a dipeptide for an efficient rate of reaction. N-terminal L-methionine is a prerequisite for activity but the enzyme has broad specificity at other positions. This chain is Peptide deformylase, found in Rickettsia akari (strain Hartford).